A 101-amino-acid polypeptide reads, in one-letter code: Cell cycle protein GpsB (101 aa).

Residues 34-71 (LDMVIKDYETFNQEIEKLQQENLHLSKQLEEAVEQGKR) adopt a coiled-coil conformation.

It belongs to the GpsB family. Forms polymers through the coiled coil domains. Interacts with PBP1, MreC and EzrA.

It localises to the cytoplasm. Divisome component that associates with the complex late in its assembly, after the Z-ring is formed, and is dependent on DivIC and PBP2B for its recruitment to the divisome. Together with EzrA, is a key component of the system that regulates PBP1 localization during cell cycle progression. Its main role could be the removal of PBP1 from the cell pole after pole maturation is completed. Also contributes to the recruitment of PBP1 to the division complex. Not essential for septum formation. This is Cell cycle protein GpsB from Bacillus pumilus (strain SAFR-032).